The sequence spans 2513 residues: MEKPVVNVDVDPQSPFVVQLQKSFPQFEVVAQQVTPNDHANARAFSHLASKLIELEVPTTATILDIGSAPARRMFSEHQYHCVCPMRSPEDPDRMMKYASKLAEKACKITNKNLHEKIKDLRTVLDTPDAETPSLCFHNDVTCNMRAEYSVMQDVYINAPGTIYHQAMKGVRTLYWIGFDTTQFMFSAMAGSYPAYNTNWADEKVLEARNIGLCSTKLSEGRTGKLSIMRKKELKPGSRVYFSVGSTLYPEHRASLQSWHLPSVFHLNGKQSYTCRCDTVVSCEGYVVKKITISPGITGETVGYAVTHNSEGFLLCKVTDTVKGERVSFPVCTYIPATICDQMTGIMATDISPDDAQKLLVGLNQRIVINGRTNRNTNTMQNYLLPIIAQGFSKWAKERKDDLDNEKMLGTRERKLTYGCLWAFRTKKVHSFYRPPGTQTCVKVPASFSAFPMSSVWTTSLPMSLRQKLKLALQPKKEEKLLQVSEELVMEAKAAFEDAQEEARAEKLREALPPLVADKGIEAAAEVVCEVEGLQADIGAALVETPRGHVRIIPQANDRMIGQYIVVSPNSVLKNAKLAPAHPLADQVKIITHSGRSGRYAVEPYDAKVLMPAGGAVPWPEFLALSESATLVYNEREFVNRKLYHIAMHGPAKNTEEEQYKVTKAELAETEYVFDVDKKRCVKKEEASGLVLSGELTNPPYHELALEGLKTRPAVPYKVETIGVIGTPGSGKSAIIKSTVTARDLVTSGKKENCREIEADVLRLRGMQITSKTVDSVMLNGCHKAVEVLYVDEAFACHAGALLALIAIVRPRKKVVLCGDPMQCGFFNMMQLKVHFNHPEKDICTKTFYKYISRRCTQPVTAIVSTLHYDGKMKTTNPCKKNIEIDITGATKPKPGDIILTCFRGWVKQLQIDYPGHEVMTAAASQGLTRKGVYAVRQKVNENPLYAITSEHVNVLLTRTEDRLVWKTLQGDPWIKQPTNIPKGNFQATIEDWEAEHKGIIAAINSPTPRANPFSCKTNVCWAKALEPILATAGIVLTGCQWSELFPQFADDKPHSAIYALDVICIKFFGMDLTSGLFSKQSIPLTYHPADSARPVAHWDNSPGTRKYGYDHAIAAELSRRFPVFQLAGKGTQLDLQTGRTRVISAQHNLVPVNRNLPHALVPEYKEKQPGPVKKFLNQFKHHSVLVVSEEKIEAPRKRIEWIAPIGIAGADKNYNLAFGFPPQARYDLVFINIGTKYRNHHFQQCEDHAATLKTLSRSALNCLNPGGTLVVKSYGYADRNSEDVVTALARKFVRVSAARPDCVSSNTEMYLIFRQLDNSRTRQFTPHHLNCVISSVYEGTRDGVGAAPSYRTKRENIADCQEEAVVNAANPLGRPGEGVCRAIYKRWPTSFTDSATETGTARMTVCLGKKVIHAVGPDFRKHPEAEALKLLQNAYHAVADLVNEHNIKSVAIPLLSTGIYAAGKDRLEVSLNCLTTALDRTDADVTIYCLDKKWKERIDAALQLKESVTELKDEDMEIDDELVWIHPDSCLKGRKGFSTTKGKLYSYFEGTKFHQAAKDMAEIKVLFPNDQESNEQLCAYILGETMEAIREKCPVDHNPSSSPPKTLPCLCMYAMTPERVHRLRSNNVKEVTVCSSTPLPKHKIKNVQKVQCTKVVLFNPHTPAFVPARKYIEVPEQPTAPPAQAEEAPEVVATPSPSTADNTSLDVTDISLDMDDSSEGSLFSSFSGSDNSITSMDSWSSGPSSLEIVDRRQVVVADVHAVQEPAPIPPPRLKKMARLAAARKEPTPPASNSSESLHLSFGGVSMSLGSIFDGETARQAAVQPLATGPTDVPMSFGSFSDGEIDELSRRVTESEPVLFGSFEPGEVNSIISSRSAVSFPLRKQRRRRRSRRTEYXLTGVGGYIFSTDTGPGHLQKKSVLQNQLTEPTLERNVLERIHAPVLDTSKEEQLKLRYQMMPTEANKSRYQSRKVENQKAITTERLLSGLRLYNSATDQPECYKITYPKPLYSSSVPANYSDPQFAVAVCNNYLHENYPTVASYQITDEYDAYLDMVDGTVACLDTATFCPAKLRSYPKKHEYRAPNIRSAVPSAMQNTLQNVLIAATKRNCNVTQMRELPTLDSATFNVECFRKYACNDEYWEEFARKPIRITTEFVTAYVARLKGPKAAALFAKTYNLVPLQEVPMDRFVMDMKRDVKVTPGTKHTEERPKVQVIQAAEPLATAYLCGIHRELVRRLTAVLLPNIHTLFDMSAEDFDAIIAEHFKQGDPVLETDIASFDKSQDDAMALTGLMILEDLGVDQPLLDLIECAFGEISSTHLPTGTRFKFGAMMKSGMFLTLFVNTVLNVVIASRVLEERLKTSRCAAFIGDDNIIHGVVSDKEMAERCATWLNMEVKIIDAVIGERPPYFCGGFILQDSVTSTACRVADPLKRLFKLGKPLPADDEQDEDRRRALLDETKAWFRVGITGTLAVAVTTRYEVDNITPVLLALRTFAQSKRAFQAIRGEIKHLYGGPK.

The Alphavirus-like MT domain occupies 30 to 260 (VAQQVTPNDH…EHRASLQSWH (231 aa)). A nsP1 membrane-binding region spans residues 245–264 (GSTLYPEHRASLQSWHLPSV). The S-palmitoyl cysteine; by host moiety is linked to residue cysteine 420. Residues 695–850 (ELTNPPYHEL…KDICTKTFYK (156 aa)) form the (+)RNA virus helicase ATP-binding domain. Residue 726–733 (GTPGSGKS) coordinates a ribonucleoside 5'-triphosphate. The region spanning 851-999 (YISRRCTQPV…IEDWEAEHKG (149 aa)) is the (+)RNA virus helicase C-terminal domain. One can recognise a Peptidase C9 domain in the interval 1012–1341 (NPFSCKTNVC…CVISSVYEGT (330 aa)). The nucleolus localization signal stretch occupies residues 1013–1032 (PFSCKTNVCWAKALEPILAT). Cysteine 1021 functions as the For cysteine protease nsP2 activity in the catalytic mechanism. The short motif at 1066-1075 (IKFFGMDLTS) is the Nuclear export signal element. The For cysteine protease nsP2 activity role is filled by histidine 1098. The short motif at 1196–1200 (PRKRI) is the Nuclear localization signal element. The Macro domain occupies 1348–1507 (APSYRTKREN…RIDAALQLKE (160 aa)). ADP-D-ribose contacts are provided by asparagine 1371, glycine 1379, glycine 1459, isoleucine 1460, and tyrosine 1461. The Zn(2+) site is built by cysteine 1610, cysteine 1612, cysteine 1635, and cysteine 1653. A compositionally biased stretch (low complexity) spans 1679–1696 (PTAPPAQAEEAPEVVATP). The disordered stretch occupies residues 1679-1705 (PTAPPAQAEEAPEVVATPSPSTADNTS). 2 consecutive short sequence motifs (FGDF; binding to host G3BP1) follow at residues 1837–1840 (FGSF) and 1860–1863 (FGSF). The RdRp catalytic domain maps to 2267-2382 (DPVLETDIAS…HGVVSDKEMA (116 aa)).

As to quaternary structure, interacts with non-structural protein 3. Interacts with RNA-directed RNA polymerase nsP4. Interacts with protease nsP2. interacts with itself. Interacts with host TMEM45B; this interaction leads to viral replication inhibition. Interacts with mRNA-capping enzyme nsP1. Interacts with host DDX1. Interacts with host DDX3. Interacts (via C-terminus) with host G3BP1; this interaction inhibits the formation of host stress granules on viral mRNAs and the nsp3-G3BP1 complexes bind viral RNAs and probably orchestrate the assembly of viral replication complexes. Interacts (via C-terminus) with host G3BP2; this interaction inhibits the formation of host stress granules on viral mRNAs and the nsp3-G3BP2 complexes bind viral RNAs and probably orchestrate the assembly of viral replication complexes. In terms of assembly, interacts with mRNA-capping enzyme nsP1. Interacts with protease nsP2. interacts with itself. Interacts with host TMEM45B; this interaction leads to viral replication inhibition. As to quaternary structure, interacts with RNA-directed RNA polymerase nsP4. Interacts with mRNA-capping enzyme nsP1. Interacts with KPNA1/karyopherin-alpha1; this interaction probably allows the active transport of protease nsP2 into the host nucleus. The cofactor is Mg(2+). It depends on Mn(2+) as a cofactor. Specific enzymatic cleavages in vivo yield mature proteins. The processing of the polyprotein is temporally regulated. In early stages (1.7 hpi), P1234 is first cleaved in trans through its nsP2 protease activity, releasing P123' and nsP4, which associate to form the early replication complex. At the same time, P1234 is also cut at the nsP1/nsP2 site early in infection but with lower efficiency. After replication of the viral minus-strand RNAs (4 hpi), the polyproteins are cut at the nsP1/nsP2 and nsP2/nsP3 sites very efficiently, preventing accumulation of P123' and P1234 and allowing the formation of the late replication complex. NsP3'/nsP4 site is not cleaved anymore and P34 is produced rather than nsP4. Post-translationally, specific enzymatic cleavages in vivo yield mature proteins. The processing of the polyprotein is temporally regulated. In early stages (1.7 hpi), P123 is cleaved at the nsP1/nsP2 site with low efficiency. After replication of the viral minus-strand RNAs (4 hpi), the polyproteins are cut at the nsP1/nsP2 and nsP2/nsP3 sites very efficiently, preventing accumulation of P123 and allowing the formation of the late replication complex. In terms of processing, specific enzymatic cleavages in vivo yield mature proteins. The processing of the polyprotein is temporally regulated. In early stages (1.7 hpi), P123' is cleaved at the nsP1/nsP2 site with low efficiency. After replication of the viral minus-strand RNAs (4 hpi), the polyproteins are cut at the nsP1/nsP2 and nsP2/nsP3 sites very efficiently, preventing accumulation of P123' and allowing the formation of the late replication complex. Palmitoylated by host palmitoyltransferases ZDHHC2 and ZDHHC19. Post-translationally, phosphorylated by host on serines and threonines. In terms of processing, ubiquitinated; targets the protein for rapid degradation via the ubiquitin system. Nsp4 is present in extremely low quantities due to low frequency of translation through the amber stop-codon and the degradation by the ubiquitin pathway.

It localises to the host cytoplasmic vesicle membrane. The protein localises to the host cell membrane. Its subcellular location is the host cell projection. The protein resides in the host filopodium. It is found in the host nucleus. It localises to the host cytoplasm. The catalysed reaction is GTP + S-adenosyl-L-methionine = N(7)-methyl-GTP + S-adenosyl-L-homocysteine. It carries out the reaction N(7)-methyl-GTP + L-histidyl-[protein] = N(tele)-(N(7)-methylguanosine 5'-phospho)-L-histidyl-[protein] + diphosphate. The enzyme catalyses N(tele)-(N(7)-methylguanosine 5'-phospho)-L-histidyl-[protein] + a 5'-end diphospho-(purine-ribonucleoside) in mRNA + H(+) = a 5'-end (N(7)-methyl 5'-triphosphoguanosine)-(purine-ribonucleoside) in mRNA + L-histidyl-[protein]. It catalyses the reaction a 5'-end triphospho-ribonucleoside in mRNA + H2O = a 5'-end diphospho-ribonucleoside in mRNA + phosphate + H(+). The catalysed reaction is a ribonucleoside 5'-triphosphate + H2O = a ribonucleoside 5'-diphosphate + phosphate + H(+). It carries out the reaction ATP + H2O = ADP + phosphate + H(+). The enzyme catalyses RNA(n) + a ribonucleoside 5'-triphosphate = RNA(n+1) + diphosphate. It catalyses the reaction RNA(n) + ATP = RNA(n)-3'-adenine ribonucleotide + diphosphate. The catalysed reaction is 4-O-(ADP-D-ribosyl)-L-aspartyl-[protein] + H2O = L-aspartyl-[protein] + ADP-D-ribose + H(+). It carries out the reaction 5-O-(ADP-D-ribosyl)-L-glutamyl-[protein] + H2O = L-glutamyl-[protein] + ADP-D-ribose + H(+). The enzyme catalyses ADP-alpha-D-ribose 1''-phosphate + H2O = ADP-D-ribose + phosphate. Functionally, inactive precursor of the viral replicase, which is activated by cleavages carried out by the viral protease nsP2. In terms of biological role, the early replication complex formed by the polyprotein P123 and nsP4 synthesizes minus-strand RNAs. Polyprotein P123 is a short-lived polyprotein that accumulates during early stage of infection. As soon P123 is cleaved into mature proteins, the plus-strand RNAs synthesis begins. Its function is as follows. The early replication complex formed by the polyprotein P123' and nsP4 synthesizes minus-strand RNAs. Polyprotein P123' is a short-lived polyprotein that accumulates during early stage of infection. As soon P123' is cleaved into mature proteins, the plus-strand RNAs synthesis begins. Cytoplasmic capping enzyme that catalyzes two virus-specific reactions: methyltransferase and nsP1 guanylyltransferase. mRNA-capping is necessary since all viral RNAs are synthesized in the cytoplasm, and host capping enzymes are restricted to the nucleus. The enzymatic reaction involves a covalent link between 7-methyl-GMP and nsP1, whereas eukaryotic capping enzymes form a covalent complex only with GMP. nsP1 capping consists in the following reactions: GTP is first methylated into 7-methyl-GMP and then is covalently linked to nsP1 to form the m7GMp-nsP1 complex from which 7-methyl-GMP complex is transferred to the mRNA to create the cap structure. NsP1 is needed for the initiation of the minus-strand RNAs synthesis. Probably serves as a membrane anchor for the replication complex composed of nsP1-nsP4. Palmitoylated nsP1 is remodeling host cell cytoskeleton, and induces filopodium-like structure formation at the surface of the host cell. Functionally, multifunctional protein whose N-terminus is part of the RNA polymerase complex and displays NTPase, RNA triphosphatase and helicase activities. NTPase and RNA triphosphatase are involved in viral RNA capping and helicase keeps a check on the dsRNA replication intermediates. The C-terminus harbors a protease that specifically cleaves the polyproteins and releases the mature proteins. Required for the shutoff of minus-strand RNAs synthesis. Specifically inhibits the host IFN response by promoting the nuclear export of host STAT1. Also inhibits host transcription by inducing rapid proteasome-dependent degradation of POLR2A, a catalytic subunit of the RNAPII complex. The resulting inhibition of cellular protein synthesis serves to ensure maximal viral gene expression and to evade host immune response. In terms of biological role, seems to be essential for minus-strand RNAs and subgenomic 26S mRNAs synthesis. Displays mono-ADP-ribosylhydrolase activity. ADP-ribosylation is a post-translantional modification that controls various processes of the host cell and the virus probably needs to revert it for optimal viral replication. Binds proteins of G3BP family and sequesters them into the viral RNA replication complexes thereby inhibiting the formation of host stress granules on viral mRNAs. The nsp3-G3BP complexes bind viral RNAs and probably orchestrate the assembly of viral replication complexes, thanks to the ability of G3BP family members to self-assemble and bind DNA. Its function is as follows. Seems to be essential for minus-strand RNAs and subgenomic 26S mRNAs synthesis. Displays mono-ADP-ribosylhydrolase activity. ADP-ribosylation is a post-translational modification that controls various processes of the host cell and the virus probably needs to revert it for optimal viral replication. Binds proteins of G3BP family and sequesters them into the viral RNA replication complexes thereby inhibiting the formation of host stress granules on viral mRNAs. The nsp3'-G3BP complexes bind viral RNAs and probably orchestrate the assembly of viral replication complexes, thanks to the ability of G3BP family members to self-assemble and bind DNA. RNA dependent RNA polymerase. Replicates genomic and antigenomic RNA by recognizing replications specific signals. The early replication complex formed by the polyprotein P123 and nsP4 synthesizes minus-strand RNAs. The late replication complex composed of fully processed nsP1-nsP4 is responsible for the production of genomic and subgenomic plus-strand RNAs. The core catalytic domain of nsP4 also possesses terminal adenylyltransferase (TATase) activity that is probably involved in maintenance and repair of the poly(A) tail, an element required for replication of the viral genome. This is Polyprotein P1234 from Acrocephalus scirpaceus (Eurasian reed-warbler).